Consider the following 432-residue polypeptide: Serine--tRNA ligase (432 aa).

238–240 (TAE) contacts L-serine. 269 to 271 (RSE) contacts ATP. Glu-292 contacts L-serine. 357 to 360 (EISS) provides a ligand contact to ATP. Position 393 (Ser-393) interacts with L-serine.

The protein belongs to the class-II aminoacyl-tRNA synthetase family. Type-1 seryl-tRNA synthetase subfamily. Homodimer. The tRNA molecule binds across the dimer.

Its subcellular location is the cytoplasm. The enzyme catalyses tRNA(Ser) + L-serine + ATP = L-seryl-tRNA(Ser) + AMP + diphosphate + H(+). It carries out the reaction tRNA(Sec) + L-serine + ATP = L-seryl-tRNA(Sec) + AMP + diphosphate + H(+). The protein operates within aminoacyl-tRNA biosynthesis; selenocysteinyl-tRNA(Sec) biosynthesis; L-seryl-tRNA(Sec) from L-serine and tRNA(Sec): step 1/1. Functionally, catalyzes the attachment of serine to tRNA(Ser). Is also able to aminoacylate tRNA(Sec) with serine, to form the misacylated tRNA L-seryl-tRNA(Sec), which will be further converted into selenocysteinyl-tRNA(Sec). This chain is Serine--tRNA ligase, found in Hyphomonas neptunium (strain ATCC 15444).